The chain runs to 314 residues: Epithelial cell adhesion molecule (314 aa).

Positions 1–23 (MAPPQVLAFGLLLAAATATFAAA) are cleaved as a signal peptide. Residues 24–265 (QEECVCENYK…APEFSMQGLK (242 aa)) are Extracellular-facing. 6 disulfide bridges follow: C27–C46, C29–C59, C38–C48, C66–C99, C110–C116, and C118–C135. Positions 63 to 135 (AAKCLVMKAE…RTDKDTEITC (73 aa)) constitute a Thyroglobulin type-1 domain. An N-linked (GlcNAc...) asparagine; partial glycan is attached at N74. An N-linked (GlcNAc...) asparagine glycan is attached at N111. The N-linked (GlcNAc...) asparagine glycan is linked to N198. Residues 266–288 (AGVIAVIVVVVIAVVAGIVVLVI) traverse the membrane as a helical segment. Residues 289-314 (SRKKRMAKYEKAEIKEMGEMHRELNA) are Cytoplasmic-facing.

This sequence belongs to the EPCAM family. As to quaternary structure, monomer. Interacts with phosphorylated CLDN7. Hyperglycosylated in carcinoma tissue as compared with autologous normal epithelia. Glycosylation at Asn-198 is crucial for protein stability. As to expression, highly and selectively expressed by undifferentiated rather than differentiated embryonic stem cells (ESC). Levels rapidly diminish as soon as ESC's differentiate (at protein levels). Expressed in almost all epithelial cell membranes but not on mesodermal or neural cell membranes. Found on the surface of adenocarcinoma.

Its subcellular location is the lateral cell membrane. It is found in the cell junction. The protein localises to the tight junction. Its function is as follows. May act as a physical homophilic interaction molecule between intestinal epithelial cells (IECs) and intraepithelial lymphocytes (IELs) at the mucosal epithelium for providing immunological barrier as a first line of defense against mucosal infection. Plays a role in embryonic stem cells proliferation and differentiation. Up-regulates the expression of FABP5, MYC and cyclins A and E. In Homo sapiens (Human), this protein is Epithelial cell adhesion molecule (EPCAM).